The chain runs to 181 residues: ATP synthase subunit b (181 aa).

Residues 12-32 (LPAVYDIVWSAVVFVVLLVVI) traverse the membrane as a helical segment.

Belongs to the ATPase B chain family. F-type ATPases have 2 components, F(1) - the catalytic core - and F(0) - the membrane proton channel. F(1) has five subunits: alpha(3), beta(3), gamma(1), delta(1), epsilon(1). F(0) has three main subunits: a(1), b(2) and c(10-14). The alpha and beta chains form an alternating ring which encloses part of the gamma chain. F(1) is attached to F(0) by a central stalk formed by the gamma and epsilon chains, while a peripheral stalk is formed by the delta and b chains.

It localises to the cell membrane. In terms of biological role, f(1)F(0) ATP synthase produces ATP from ADP in the presence of a proton or sodium gradient. F-type ATPases consist of two structural domains, F(1) containing the extramembraneous catalytic core and F(0) containing the membrane proton channel, linked together by a central stalk and a peripheral stalk. During catalysis, ATP synthesis in the catalytic domain of F(1) is coupled via a rotary mechanism of the central stalk subunits to proton translocation. Component of the F(0) channel, it forms part of the peripheral stalk, linking F(1) to F(0). The sequence is that of ATP synthase subunit b from Clavibacter sepedonicus (Clavibacter michiganensis subsp. sepedonicus).